Here is a 444-residue protein sequence, read N- to C-terminus: MNHSRSHALFVQAQTRIPGGVNSPVRAFRSVGGEPFFVARADGPYLFDVDGHRYIDYVGSWGPMIVGHNHPAVREAVQVAISNGLSYGAPCAAEVTMAETIARLVPSCEMVRMVNSGTEATLSAIRLARGATGRNYIVKFEGCYHGHGDSFLVKGGSGMLTLGIPSSPGVPAELSKLTITLTYNDFDAATALFEEMGHHIAAVIVEPVIGNANCIPPQPGYLQHLRTLCTQYAVLLIFDEVMTGFRVALGGAQALYGVTPDLTTFGKIIGGGMPVGAYGGRRDLMQHIAPTGPIYQAGTLSGNPVAMAAGLAMLELIQAPDFYTHLSNAAAALCTGLQQAASQAGIAMTTQQIGGMFGLFFTDQQVETYAQATACNTDRFNRFFHAMLQRGVFFAPSAYEAGFISSAHSPNIIETTLEAARTAFQTIANEAAILSKSETPIKMR.

The residue at position 267 (lysine 267) is an N6-(pyridoxal phosphate)lysine.

Belongs to the class-III pyridoxal-phosphate-dependent aminotransferase family. HemL subfamily. In terms of assembly, homodimer. It depends on pyridoxal 5'-phosphate as a cofactor.

Its subcellular location is the cytoplasm. It carries out the reaction (S)-4-amino-5-oxopentanoate = 5-aminolevulinate. It functions in the pathway porphyrin-containing compound metabolism; protoporphyrin-IX biosynthesis; 5-aminolevulinate from L-glutamyl-tRNA(Glu): step 2/2. This chain is Glutamate-1-semialdehyde 2,1-aminomutase, found in Xylella fastidiosa (strain Temecula1 / ATCC 700964).